Reading from the N-terminus, the 323-residue chain is O-phosphoserine sulfhydrylase (323 aa).

K51 bears the N6-(pyridoxal phosphate)lysine mark. Pyridoxal 5'-phosphate contacts are provided by residues N81 and 184–188 (GTTGT). A substrate-binding site is contributed by R220. S265 serves as a coordination point for pyridoxal 5'-phosphate.

It belongs to the cysteine synthase/cystathionine beta-synthase family. In terms of assembly, homodimer. Requires pyridoxal 5'-phosphate as cofactor.

The catalysed reaction is [CysO sulfur-carrier protein]-C-terminal-Gly-aminoethanethioate + O-phospho-L-serine + H(+) = [CysO sulfur-carrier protein]-Gly-NH-CH2-C(O)-S-L-Cys + phosphate. The protein operates within amino-acid biosynthesis; L-cysteine biosynthesis. Functionally, catalyzes the formation of a covalent CysO-cysteine adduct via a sulfur transfer, using the thiocarboxylated sulfur carrier protein CysO-COSH as sulfur donor and O-phospho-L-serine (OPS) as sulfur acceptor. Can also use sodium sulfide as sulfur donor in vitro, albeit with less efficiency. This is O-phosphoserine sulfhydrylase (cysM) from Mycobacterium bovis (strain ATCC BAA-935 / AF2122/97).